The chain runs to 457 residues: Multidrug resistance protein MdtK (457 aa).

Transmembrane regions (helical) follow at residues 11-31 (LLAL…MGVV), 46-66 (AVAV…GLLL), 93-113 (WLAL…DHVI), 127-147 (AVGF…FQVL), 160-180 (GMVI…IFIY), 188-208 (LGGV…FLMM), 243-263 (LPVA…ALLV), 283-301 (LMFM…RVGF), 316-336 (YTSM…TIVF), 357-377 (LMLL…GSGV), 387-407 (IFFI…YLLG), and 418-438 (PAGF…LMVL).

The protein belongs to the multi antimicrobial extrusion (MATE) (TC 2.A.66.1) family. MdtK subfamily.

The protein resides in the cell inner membrane. In terms of biological role, multidrug efflux pump that functions probably as a Na(+)/drug antiporter. This Yersinia pseudotuberculosis serotype IB (strain PB1/+) protein is Multidrug resistance protein MdtK.